The primary structure comprises 457 residues: Argininosuccinate lyase (457 aa).

It belongs to the lyase 1 family. Argininosuccinate lyase subfamily.

The protein resides in the cytoplasm. It catalyses the reaction 2-(N(omega)-L-arginino)succinate = fumarate + L-arginine. It functions in the pathway amino-acid biosynthesis; L-arginine biosynthesis; L-arginine from L-ornithine and carbamoyl phosphate: step 3/3. The protein is Argininosuccinate lyase of Yersinia pseudotuberculosis serotype O:1b (strain IP 31758).